Here is a 253-residue protein sequence, read N- to C-terminus: 5'/3'-nucleotidase SurE (253 aa).

Aspartate 8, aspartate 9, serine 39, and asparagine 92 together coordinate a divalent metal cation.

The protein belongs to the SurE nucleotidase family. A divalent metal cation serves as cofactor.

It is found in the cytoplasm. It carries out the reaction a ribonucleoside 5'-phosphate + H2O = a ribonucleoside + phosphate. It catalyses the reaction a ribonucleoside 3'-phosphate + H2O = a ribonucleoside + phosphate. The catalysed reaction is [phosphate](n) + H2O = [phosphate](n-1) + phosphate + H(+). Nucleotidase with a broad substrate specificity as it can dephosphorylate various ribo- and deoxyribonucleoside 5'-monophosphates and ribonucleoside 3'-monophosphates with highest affinity to 3'-AMP. Also hydrolyzes polyphosphate (exopolyphosphatase activity) with the preference for short-chain-length substrates (P20-25). Might be involved in the regulation of dNTP and NTP pools, and in the turnover of 3'-mononucleotides produced by numerous intracellular RNases (T1, T2, and F) during the degradation of various RNAs. In Shigella dysenteriae serotype 1 (strain Sd197), this protein is 5'/3'-nucleotidase SurE.